Reading from the N-terminus, the 414-residue chain is L-cysteine:1D-myo-inositol 2-amino-2-deoxy-alpha-D-glucopyranoside ligase (414 aa).

C44 lines the Zn(2+) pocket. Residues 44 to 47 (CGIT), T59, and 82 to 84 (NIT) contribute to the L-cysteinyl-5'-AMP site. A 'HIGH' region motif is present at residues 46–56 (ITPYDSTHLGH). Residues 188-193 (ERGGDP) carry the 'ERGGDP' region motif. Residue W228 participates in L-cysteinyl-5'-AMP binding. C232 provides a ligand contact to Zn(2+). 250–252 (GSD) is a binding site for L-cysteinyl-5'-AMP. H257 lines the Zn(2+) pocket. L-cysteinyl-5'-AMP is bound at residue I284. The 'KMSKS' region signature appears at 290 to 294 (KMSKS).

It belongs to the class-I aminoacyl-tRNA synthetase family. MshC subfamily. As to quaternary structure, monomer. Zn(2+) is required as a cofactor.

It carries out the reaction 1D-myo-inositol 2-amino-2-deoxy-alpha-D-glucopyranoside + L-cysteine + ATP = 1D-myo-inositol 2-(L-cysteinylamino)-2-deoxy-alpha-D-glucopyranoside + AMP + diphosphate + H(+). Catalyzes the ATP-dependent condensation of GlcN-Ins and L-cysteine to form L-Cys-GlcN-Ins. This chain is L-cysteine:1D-myo-inositol 2-amino-2-deoxy-alpha-D-glucopyranoside ligase (mshC), found in Corynebacterium diphtheriae (strain ATCC 700971 / NCTC 13129 / Biotype gravis).